Here is a 413-residue protein sequence, read N- to C-terminus: Tyrosine--tRNA ligase (413 aa).

L-tyrosine is bound at residue Y34. The 'HIGH' region motif lies at 39-48 (CTAQSLHVGN). The L-tyrosine site is built by Y171 and Q175. Positions 231–235 (KMGKT) match the 'KMSKS' region motif. An ATP-binding site is contributed by K234. One can recognise an S4 RNA-binding domain in the interval 346–411 (IPITELLVTI…GKKCHILVKI (66 aa)).

This sequence belongs to the class-I aminoacyl-tRNA synthetase family. TyrS type 1 subfamily. As to quaternary structure, homodimer.

It localises to the cytoplasm. The catalysed reaction is tRNA(Tyr) + L-tyrosine + ATP = L-tyrosyl-tRNA(Tyr) + AMP + diphosphate + H(+). In terms of biological role, catalyzes the attachment of tyrosine to tRNA(Tyr) in a two-step reaction: tyrosine is first activated by ATP to form Tyr-AMP and then transferred to the acceptor end of tRNA(Tyr). The sequence is that of Tyrosine--tRNA ligase from Orientia tsutsugamushi (strain Ikeda) (Rickettsia tsutsugamushi).